We begin with the raw amino-acid sequence, 206 residues long: LexA repressor (206 aa).

Residues 28 to 48 constitute a DNA-binding region (H-T-H motif); the sequence is VREIGEAVGLASSSTVHGHLA. Residues S128 and K166 each act as for autocatalytic cleavage activity in the active site.

This sequence belongs to the peptidase S24 family. In terms of assembly, homodimer.

The enzyme catalyses Hydrolysis of Ala-|-Gly bond in repressor LexA.. Represses a number of genes involved in the response to DNA damage (SOS response), including recA and lexA. In the presence of single-stranded DNA, RecA interacts with LexA causing an autocatalytic cleavage which disrupts the DNA-binding part of LexA, leading to derepression of the SOS regulon and eventually DNA repair. This is LexA repressor from Bacillus pumilus (strain SAFR-032).